We begin with the raw amino-acid sequence, 921 residues long: cGMP-dependent 3',5'-cyclic phosphodiesterase (921 aa).

Residue methionine 1 is modified to N-acetylmethionine. Disordered regions lie at residues 1-21 and 177-198; these read MRRQ…PPGS and ESSV…DQKG. The segment covering 177 to 188 has biased composition (polar residues); it reads ESSVAPEATQNP. GAF domains lie at 220–357 and 389–528; these read DASS…STVL and DVSV…GISI. 3',5'-cyclic GMP contacts are provided by serine 411, aspartate 426, isoleucine 445, tyrosine 468, and threonine 479. One can recognise a PDEase domain in the interval 558–882; that stretch reads SDDEYTKLLH…EHWTKVSHKF (325 aa). The Proton donor role is filled by histidine 636. Zn(2+) contacts are provided by histidine 640, histidine 676, aspartate 677, and aspartate 788. Residue aspartate 677 coordinates Mg(2+).

Belongs to the cyclic nucleotide phosphodiesterase family. PDE2 subfamily. Homodimer. It depends on Zn(2+) as a cofactor. Mg(2+) is required as a cofactor.

Its subcellular location is the cell membrane. The protein localises to the cytoplasm. The protein resides in the mitochondrion. It localises to the mitochondrion inner membrane. It is found in the mitochondrion outer membrane. The catalysed reaction is a nucleoside 3',5'-cyclic phosphate + H2O = a nucleoside 5'-phosphate + H(+). It catalyses the reaction 3',5'-cyclic GMP + H2O = GMP + H(+). The enzyme catalyses 3',5'-cyclic AMP + H2O = AMP + H(+). With respect to regulation, the 3',5'-cyclic-AMP phosphodiesterase activity is stimulated by 3',5'-cyclic GMP. In terms of biological role, cGMP-activated cyclic nucleotide phosphodiesterase with a dual-specificity for the second messengers cAMP and cGMP, which are key regulators of many important physiological processes. Has a higher efficiency with cGMP compared to cAMP. Plays a role in cell growth and migration. Its function is as follows. Regulates mitochondrial cAMP levels and respiration. Involved in the regulation of mitochondria morphology/dynamics and apoptotic cell death via local modulation of cAMP/PKA signaling in the mitochondrion, including the monitoring of local cAMP levels at the outer mitochondrial membrane and of PKA-dependent phosphorylation of DNM1L. The polypeptide is cGMP-dependent 3',5'-cyclic phosphodiesterase (Bos taurus (Bovine)).